Reading from the N-terminus, the 387-residue chain is 3-dehydroquinate synthase (387 aa).

It belongs to the archaeal-type DHQ synthase family.

The catalysed reaction is 2-amino-2,3,7-trideoxy-D-lyxo-hept-6-ulosonate + NAD(+) + H2O = 3-dehydroquinate + NH4(+) + NADH + H(+). Functionally, catalyzes the oxidative deamination and cyclization of 2-amino-3,7-dideoxy-D-threo-hept-6-ulosonic acid (ADH) to yield 3-dehydroquinate (DHQ), which is fed into the canonical shikimic pathway of aromatic amino acid biosynthesis. This is 3-dehydroquinate synthase from Halobacterium salinarum (strain ATCC 29341 / DSM 671 / R1).